Here is a 191-residue protein sequence, read N- to C-terminus: COP9 signalosome complex subunit 8 (191 aa).

The PCI domain occupies 6-179 (MMAELDEKLL…VSLVPNEQQL (174 aa)).

The protein belongs to the CSN8 family. In terms of assembly, component of the CSN complex, probably composed of cops1, cops2, cops3, cops4, cops5, cops6, cops7, cops8 and cops9.

Its subcellular location is the cytoplasm. It localises to the nucleus. Functionally, component of the COP9 signalosome complex (CSN), a complex involved in various cellular and developmental processes. The CSN complex is an essential regulator of the ubiquitin (Ubl) conjugation pathway by mediating the deneddylation of the cullin subunits of E3 ligase complexes, leading to modify the Ubl ligase activity. This is COP9 signalosome complex subunit 8 (cops8) from Danio rerio (Zebrafish).